Consider the following 379-residue polypeptide: Beta sliding clamp (379 aa).

It belongs to the beta sliding clamp family. In terms of assembly, forms a ring-shaped head-to-tail homodimer around DNA which binds and tethers DNA polymerases and other proteins to the DNA. The DNA replisome complex has a single clamp-loading complex (3 tau and 1 each of delta, delta', psi and chi subunits) which binds 3 Pol III cores (1 core on the leading strand and 2 on the lagging strand) each with a beta sliding clamp dimer. Additional proteins in the replisome are other copies of gamma, psi and chi, Ssb, DNA helicase and RNA primase.

Its subcellular location is the cytoplasm. Its function is as follows. Confers DNA tethering and processivity to DNA polymerases and other proteins. Acts as a clamp, forming a ring around DNA (a reaction catalyzed by the clamp-loading complex) which diffuses in an ATP-independent manner freely and bidirectionally along dsDNA. Initially characterized for its ability to contact the catalytic subunit of DNA polymerase III (Pol III), a complex, multichain enzyme responsible for most of the replicative synthesis in bacteria; Pol III exhibits 3'-5' exonuclease proofreading activity. The beta chain is required for initiation of replication as well as for processivity of DNA replication. The chain is Beta sliding clamp (dnaN) from Rickettsia felis (strain ATCC VR-1525 / URRWXCal2) (Rickettsia azadi).